The primary structure comprises 383 residues: Chaperone protein DnaJ (383 aa).

The J domain maps to 6–71 (DYYEVLGVSK…QKRSQYDQFG (66 aa)). A CR-type zinc finger spans residues 141–223 (GVEKKVKVKK…CKGEGVEIGE (83 aa)). Zn(2+) contacts are provided by C154, C157, C171, C174, C197, C200, C211, and C214. CXXCXGXG motif repeat units lie at residues 154 to 161 (CSKCRGDG), 171 to 178 (CQTCHGTG), 197 to 204 (CPTCHGEG), and 211 to 218 (CSKCKGEG).

Belongs to the DnaJ family. As to quaternary structure, homodimer. Zn(2+) is required as a cofactor.

Its subcellular location is the cytoplasm. Functionally, participates actively in the response to hyperosmotic and heat shock by preventing the aggregation of stress-denatured proteins and by disaggregating proteins, also in an autonomous, DnaK-independent fashion. Unfolded proteins bind initially to DnaJ; upon interaction with the DnaJ-bound protein, DnaK hydrolyzes its bound ATP, resulting in the formation of a stable complex. GrpE releases ADP from DnaK; ATP binding to DnaK triggers the release of the substrate protein, thus completing the reaction cycle. Several rounds of ATP-dependent interactions between DnaJ, DnaK and GrpE are required for fully efficient folding. Also involved, together with DnaK and GrpE, in the DNA replication of plasmids through activation of initiation proteins. The sequence is that of Chaperone protein DnaJ from Porphyromonas gingivalis (strain ATCC BAA-308 / W83).